Consider the following 291-residue polypeptide: tRNA U34 carboxymethyltransferase (291 aa).

Residues K61, W75, K80, G100, 122–124, 149–150, Y169, and R284 contribute to the carboxy-S-adenosyl-L-methionine site; these read DPS and VE.

This sequence belongs to the class I-like SAM-binding methyltransferase superfamily. CmoB family. Homotetramer.

The enzyme catalyses carboxy-S-adenosyl-L-methionine + 5-hydroxyuridine(34) in tRNA = 5-carboxymethoxyuridine(34) in tRNA + S-adenosyl-L-homocysteine + H(+). Functionally, catalyzes carboxymethyl transfer from carboxy-S-adenosyl-L-methionine (Cx-SAM) to 5-hydroxyuridine (ho5U) to form 5-carboxymethoxyuridine (cmo5U) at position 34 in tRNAs. The chain is tRNA U34 carboxymethyltransferase from Campylobacter jejuni subsp. doylei (strain ATCC BAA-1458 / RM4099 / 269.97).